Here is a 446-residue protein sequence, read N- to C-terminus: Glutamine synthetase (446 aa).

One can recognise a GS beta-grasp domain in the interval 14-107 (NNVKFLRFQF…IICDVYRKNG (94 aa)). The 333-residue stretch at 114–446 (PRGCLKRVLA…DWEFNKYVRI (333 aa)) folds into the GS catalytic domain. Residues glutamate 138 and glutamate 140 each contribute to the Mg(2+) site. Glutamate 187 contributes to the ATP binding site. Positions 192 and 199 each coordinate Mg(2+). L-glutamate-binding positions include 243–244 (NG) and glycine 244. Mg(2+) is bound at residue histidine 248. Serine 252 is an ATP binding site. L-glutamate contacts are provided by arginine 301, glutamate 307, and arginine 319. The ATP site is built by arginine 319, arginine 324, and lysine 331. Glutamate 336 serves as a coordination point for Mg(2+). Arginine 338 contributes to the L-glutamate binding site.

Belongs to the glutamine synthetase family. In terms of assembly, oligomer of 12 subunits arranged in the form of two hexagons. The cofactor is Mg(2+).

The protein localises to the cytoplasm. It carries out the reaction L-glutamate + NH4(+) + ATP = L-glutamine + ADP + phosphate + H(+). Its function is as follows. Probably involved in nitrogen metabolism via ammonium assimilation. Catalyzes the ATP-dependent biosynthesis of glutamine from glutamate and ammonia. This is Glutamine synthetase from Methanococcus voltae.